A 351-amino-acid chain; its full sequence is Amylovoran biosynthesis glycosyltransferase AmsD (351 aa).

The protein belongs to the glycosyltransferase group 1 family. Glycosyltransferase 4 subfamily.

It participates in glycan metabolism; exopolysaccharide biosynthesis. Involved in the biosynthesis of amylovoran which functions as a virulence factor. May be involved in the formation of galactose alpha-1,6 linkages in amylovoran. The polypeptide is Amylovoran biosynthesis glycosyltransferase AmsD (amsD) (Erwinia amylovora (Fire blight bacteria)).